The sequence spans 1176 residues: Chromosome partition protein Smc (1176 aa).

32–39 provides a ligand contact to ATP; that stretch reads PNGCGKSN. A coiled-coil region spans residues 169 to 506; the sequence is GVSRYKERRR…VKLQEDVQKQ (338 aa). Positions 521–623 constitute an SMC hinge domain; it reads LGRLWQKLHI…TAPDLGQALA (103 aa). Coiled-coil stretches lie at residues 653-947 and 987-1024; these read DSEQ…LAAM and ERKE…LQAT.

The protein belongs to the SMC family. Homodimer.

It localises to the cytoplasm. Functionally, required for chromosome condensation and partitioning. In Bordetella petrii (strain ATCC BAA-461 / DSM 12804 / CCUG 43448), this protein is Chromosome partition protein Smc.